A 223-amino-acid polypeptide reads, in one-letter code: Icarapin (223 aa).

A signal peptide spans 1-19 (MKTLGVLFIAAWFIACTHS). 4 N-linked (GlcNAc...) asparagine glycosylation sites follow: N126, N142, N168, and N193. Over residues 186-203 (LPTLIGKNETSTQSSRSV) the composition is skewed to polar residues. The interval 186–223 (LPTLIGKNETSTQSSRSVESVEDFDNEIPKNQGDVLTA) is disordered.

In terms of tissue distribution, expressed by the venom duct.

It is found in the secreted. The chain is Icarapin from Apis mellifera carnica (Carniolan honeybee).